Here is a 143-residue protein sequence, read N- to C-terminus: Probable prefoldin subunit 2 (143 aa).

Belongs to the prefoldin subunit beta family. As to quaternary structure, heterohexamer of two PFD-alpha type and four PFD-beta type subunits.

Its function is as follows. Binds specifically to cytosolic chaperonin (c-CPN) and transfers target proteins to it. Binds to nascent polypeptide chain and promotes folding in an environment in which there are many competing pathways for nonnative proteins. The polypeptide is Probable prefoldin subunit 2 (Drosophila melanogaster (Fruit fly)).